A 207-amino-acid polypeptide reads, in one-letter code: CASP-like protein F16 (207 aa).

The interval 1-30 (MEKSEKGNGVAPATRSPMALMGSSRNENQE) is disordered. At 1–37 (MEKSEKGNGVAPATRSPMALMGSSRNENQEVNTSMRT) the chain is on the cytoplasmic side. The helical transmembrane segment at 38-58 (AETMLRLVPMALGVAALVVML) threads the bilayer. The Extracellular portion of the chain corresponds to 59-79 (KNSQSNDFGSVSYSDLGAFRY). Residues 80 to 100 (LVHANGICAGYSLLSAIIAAV) form a helical membrane-spanning segment. Residues 101–108 (PSPSTMPR) lie on the Cytoplasmic side of the membrane. Residues 109-129 (AWTFFLLDQILTYVILGAAAV) traverse the membrane as a helical segment. The Extracellular portion of the chain corresponds to 130–159 (STEVLYLANKGDSAITWSAACGTFAGFCHK). A helical membrane pass occupies residues 160-180 (ATIAVVITFVAVICYAVLSLV). Topologically, residues 181-207 (SSYRLFTKFDAPVNYPSKTIEATVFHG) are cytoplasmic.

It belongs to the Casparian strip membrane proteins (CASP) family. As to quaternary structure, homodimer and heterodimers.

It is found in the cell membrane. This chain is CASP-like protein F16 (F16), found in Gossypium hirsutum (Upland cotton).